Here is a 353-residue protein sequence, read N- to C-terminus: MSEEQFGGDGAAAAATAAVGGSAGEQEGAMVAAAQGAAAAAGSGSGGGSAPGGTEGGSTEAEGAKIDASKNEEDEGHSNSSPRHTEAATAQREEWKMFIGGLSWDTTKKDLKDYFSKFGDVVDCTLKLDPITGRSRGFGFVLFKESESVDKVMDQKEHKLNGKVIDPKRAKAMKTKEPVKKIFVGGLSPDTPEEKIREYFGGFGEVESIELPMDNKTNKRRGFCFITFKEEEPVKKIMEKKYHNVGLSKCEIKVAMSKEQYQQQQQWGSRGGFAGRARGRGGGPSQNWNQGYSNYWNQGYGSYGYNSQGYGGYGGYDYTGYNSYYGYGDYSNQQSGYGKVSRRGGHQNSYKPY.

A disordered region spans residues M1–T89. An N-acetylserine modification is found at S2. Residues A11 to G42 show a composition bias toward low complexity. Residues S43 to G56 show a composition bias toward gly residues. Residues E62–N71 show a composition bias toward basic and acidic residues. S69 is subject to Phosphoserine. K70 participates in a covalent cross-link: Glycyl lysine isopeptide (Lys-Gly) (interchain with G-Cter in SUMO2). Residues S78, S80, and S81 each carry the phosphoserine modification. T89 is subject to Phosphothreonine. RRM domains are found at residues W95–E177 and K180–E259. K117 is modified (N6-methyllysine). T125 bears the Phosphothreonine mark. K127 participates in a covalent cross-link: Glycyl lysine isopeptide (Lys-Gly) (interchain with G-Cter in SUMO2). The residue at position 163 (K163) is an N6-acetyllysine. Residue S188 is modified to Phosphoserine. T191 bears the Phosphothreonine mark. K195 is covalently cross-linked (Glycyl lysine isopeptide (Lys-Gly) (interchain with G-Cter in SUMO2)). N6-acetyllysine occurs at positions 241 and 249. Position 269 is a phosphoserine (S269). An omega-N-methylarginine mark is found at R270, R276, R278, and R280. Residue R343 is modified to Asymmetric dimethylarginine; alternate. At R343 the chain carries Dimethylated arginine; alternate. R343 carries the omega-N-methylarginine; alternate modification.

In terms of assembly, identified in a IGF2BP1-dependent mRNP granule complex containing untranslated mRNAs. Part of a complex associated with the FOS mCRD domain and consisting of PABPC1, PAIP1, CSDE1/UNR and SYNCRIP. Interacts with IGF2BP2. Interacts with GTPBP1. Interacts with EIF4G1; the interaction requires RNA. Interacts with EIF3B and RPS3. Methylated by PRMT1, in an insulin-dependent manner. The PRMT1-mediated methylation regulates its phosphorylation. Post-translationally, arg-343 is dimethylated, probably to asymmetric dimethylarginine.

The protein resides in the nucleus. The protein localises to the cytoplasm. Binds with high affinity to RNA molecules that contain AU-rich elements (AREs) found within the 3'-UTR of many proto-oncogenes and cytokine mRNAs. Also binds to double- and single-stranded DNA sequences in a specific manner and functions a transcription factor. Each of the RNA-binding domains specifically can bind solely to a single-stranded non-monotonous 5'-UUAG-3' sequence and also weaker to the single-stranded 5'-TTAGGG-3' telomeric DNA repeat. Binds RNA oligonucleotides with 5'-UUAGGG-3' repeats more tightly than the telomeric single-stranded DNA 5'-TTAGGG-3' repeats. Binding of RRM1 to DNA inhibits the formation of DNA quadruplex structure which may play a role in telomere elongation. May be involved in translationally coupled mRNA turnover. Implicated with other RNA-binding proteins in the cytoplasmic deadenylation/translational and decay interplay of the FOS mRNA mediated by the major coding-region determinant of instability (mCRD) domain. May play a role in the regulation of the rhythmic expression of circadian clock core genes. Directly binds to the 3'UTR of CRY1 mRNA and induces CRY1 rhythmic translation. May also be involved in the regulation of PER2 translation. This chain is Heterogeneous nuclear ribonucleoprotein D0 (Hnrnpd), found in Rattus norvegicus (Rat).